The primary structure comprises 699 residues: D-(-)-3-hydroxybutyrate oligomer hydrolase (699 aa).

Positions 1–33 (MTAIRGGSRRAPGLALALLGGVLLGACHGDENA) are cleaved as a signal peptide. Catalysis depends on Ser311, which acts as the Charge relay system.

The protein belongs to the D-(-)-3-hydroxybutyrate oligomer hydrolase family.

Its subcellular location is the secreted. The catalysed reaction is (3R)-hydroxybutanoate dimer + H2O = 2 (R)-3-hydroxybutanoate + H(+). The protein operates within lipid metabolism; butanoate metabolism. Its function is as follows. Participates in the degradation of poly-3-hydroxybutyrate (PHB). It works downstream of poly(3-hydroxybutyrate) depolymerase, hydrolyzing D(-)-3-hydroxybutyrate oligomers of various length (3HB-oligomers) into 3HB-monomers. The protein is D-(-)-3-hydroxybutyrate oligomer hydrolase of Burkholderia pseudomallei (strain 1106a).